We begin with the raw amino-acid sequence, 169 residues long: Ureidoglycolate lyase (169 aa).

It belongs to the ureidoglycolate lyase family. As to quaternary structure, homodimer. Ni(2+) serves as cofactor.

It catalyses the reaction (S)-ureidoglycolate = urea + glyoxylate. Its pathway is nitrogen metabolism; (S)-allantoin degradation. Functionally, catalyzes the catabolism of the allantoin degradation intermediate (S)-ureidoglycolate, generating urea and glyoxylate. Involved in the utilization of allantoin as nitrogen source. This Brucella melitensis biotype 2 (strain ATCC 23457) protein is Ureidoglycolate lyase.